The sequence spans 359 residues: PWWP domain-containing protein 1 (359 aa).

The segment at 1-37 (MNNARTNAKRRRLSSKQGGLSISEGKESNIPSVVEES) is disordered. Residues 52–114 (FGDRILVKAP…RNSVKPLLDS (63 aa)) form the PWWP domain. Disordered stretches follow at residues 133-161 (AYEA…AAEE) and 204-255 (VAST…SPLN). Residues 204–224 (VASTSRSSTQLSDQRYPLSSN) show a composition bias toward polar residues. The residue at position 252 (serine 252) is a Phosphoserine.

As to quaternary structure, interacts with set9 and histone H4K20me1. Associates with nucleosomes.

The protein localises to the nucleus. Its function is as follows. Necessary for DNA damage checkpoint activation. Required for the association of set9 with chromatin and subsequent methylation of H4K20. Associates with H4K20me1 to increase the concentration of set9 on chromatin to perform H4K20me3. H4K20me3 is mainly enriched at heterochromatin and is required for proper heterochromatin assembly. This Schizosaccharomyces pombe (strain 972 / ATCC 24843) (Fission yeast) protein is PWWP domain-containing protein 1 (pdp1).